Here is a 174-residue protein sequence, read N- to C-terminus: Secretory-abundant heat soluble protein 68234 (174 aa).

The first 19 residues, 1–19 (MARFLVALALFGVVAMTAA), serve as a signal peptide directing secretion. Positions 26–57 (EWSGKPWLGKFVAEVTDKSENWEAFVDALGLP) are SAHS-c1. Residues 72-100 (YKQGDHYHHIFALPDKNFEKDIEFTLGQE) form an SAHS-c2 region. The SAHS-c3 stretch occupies residues 113–162 (KYSEDGEKLVADVSIPTKGKTIRSEYEVQGDQLIKTYKTGDIVAKKWFKK).

The protein belongs to the Secretory-abundant heat soluble protein (SAHS) family.

The protein localises to the secreted. In terms of biological role, secreted heat soluble protein acting as a molecular shield in water-deficient condition. Tardigrade-specific intrinsically disordered proteins (TDPs) are essential for desiccation tolerance by forming non-crystalline amorphous solids upon desiccation, and this vitrified state mirrors their protective capabilities. In Hypsibius exemplaris (Freshwater tardigrade), this protein is Secretory-abundant heat soluble protein 68234.